Consider the following 79-residue polypeptide: uncharacterized protein (79 aa).

Belongs to the UPF0440 family.

This is an uncharacterized protein from Methanocella arvoryzae (strain DSM 22066 / NBRC 105507 / MRE50).